A 532-amino-acid polypeptide reads, in one-letter code: Protein PTST homolog 2, chloroplastic (532 aa).

The transit peptide at Met-1 to Arg-71 directs the protein to the chloroplast. Disordered stretches follow at residues Gln-165–Asp-201, Glu-256–Trp-292, Ser-314–Asn-347, and His-367–Asn-388. Residues Glu-173–Leu-183 are compositionally biased toward basic and acidic residues. The span at Val-320–Ile-339 shows a compositional bias: basic and acidic residues. Positions Leu-389–Thr-454 form a coiled coil.

Interacts with PTST3 and SS4. Interacts with MFP1; the interaction is essential for the initiation of starch granules biosynthesis in leaf chloroplasts, for the correct location of the process in the stromal spaces between the thylakoid membranes, and for the association of this protein with the thylakoid membranes. Interacts with PII1/MRC; the interaction is essential for the initiation of starch granules biosynthesis in leaf chloroplasts.

The protein localises to the plastid. It localises to the chloroplast. It is found in the chloroplast thylakoid membrane. Its function is as follows. Involved in starch granule initiation in leaf chloroplasts. Binds and delivers suitable maltooligosaccharide substrates to starch synthase 4 (SS4). This Arabidopsis thaliana (Mouse-ear cress) protein is Protein PTST homolog 2, chloroplastic.